Here is a 248-residue protein sequence, read N- to C-terminus: MRDYKVVVLGAGGVGKSSITVQFVQGVYVESYDPTIEDSYRKQIEVDGRACDLEILDTAGVAQFTAMRELYIKSGKGFLLVYSVTDENSLKELLALREQVLRIKDSDNVPMVLVGNKCDLEDDRVLSIEDGVKVSQDWGLVPFYETSAMYKTNVDEAFIDVVRQIMRKEAAISAEKKQQKELQKQQQQQQQEQDAEGQQQQQKSGKSKSSATQKDATADGQTDVNARLKQSINDHPKSSSGSKFCTII.

A GTP-binding site is contributed by 10 to 17 (GAGGVGKS). The Effector region signature appears at 32–40 (YDPTIEDSY). Residues 57 to 61 (DTAGV) and 116 to 119 (NKCD) contribute to the GTP site. The segment at 182–248 (LQKQQQQQQQ…SSGSKFCTII (67 aa)) is disordered. Residues 184–214 (KQQQQQQQEQDAEGQQQQQKSGKSKSSATQK) show a composition bias toward low complexity. Polar residues-rich tracts occupy residues 219-231 (DGQT…LKQS) and 238-248 (SSSGSKFCTII). A Cysteine methyl ester modification is found at Cys-245. Cys-245 carries S-geranylgeranyl cysteine lipidation. A propeptide spans 246-248 (TII) (removed in mature form).

This sequence belongs to the small GTPase superfamily. Ras family.

Its subcellular location is the cell membrane. It catalyses the reaction GTP + H2O = GDP + phosphate + H(+). Alternates between an inactive form bound to GDP and an active form bound to GTP. Activated by a guanine nucleotide-exchange factor (GEF) and inactivated by a GTPase-activating protein (GAP). Its function is as follows. Ras-related protein which binds GDP/GTP and possesses intrinsic GTPase activity. Involved in both yeast and hypha development. In the yeast phase, it is required for normal (polar) bud site selection and is involved in cell morphogenesis; in the yeast-mycelial transition it is involved in germ tube emergence; and in the development of the hyphae it is involved in cell elongation. In Candida albicans (Yeast), this protein is Ras-related protein RSR1 (RSR1).